A 440-amino-acid chain; its full sequence is Adenylosuccinate lyase (440 aa).

Residues 4–5 (RY), 67–69 (KHD), and 93–94 (TS) contribute to the N(6)-(1,2-dicarboxyethyl)-AMP site. His141 (proton donor/acceptor) is an active-site residue. Residue Gln212 coordinates N(6)-(1,2-dicarboxyethyl)-AMP. The Proton donor/acceptor role is filled by Ser262. N(6)-(1,2-dicarboxyethyl)-AMP contacts are provided by residues Ser263, 268-270 (KRN), Asn276, and 307-311 (SVERF).

Belongs to the lyase 1 family. Adenylosuccinate lyase subfamily. Homotetramer. Residues from neighboring subunits contribute catalytic and substrate-binding residues to each active site.

The catalysed reaction is N(6)-(1,2-dicarboxyethyl)-AMP = fumarate + AMP. It catalyses the reaction (2S)-2-[5-amino-1-(5-phospho-beta-D-ribosyl)imidazole-4-carboxamido]succinate = 5-amino-1-(5-phospho-beta-D-ribosyl)imidazole-4-carboxamide + fumarate. The protein operates within purine metabolism; AMP biosynthesis via de novo pathway; AMP from IMP: step 2/2. It participates in purine metabolism; IMP biosynthesis via de novo pathway; 5-amino-1-(5-phospho-D-ribosyl)imidazole-4-carboxamide from 5-amino-1-(5-phospho-D-ribosyl)imidazole-4-carboxylate: step 2/2. In terms of biological role, catalyzes two reactions in de novo purine nucleotide biosynthesis. Catalyzes the breakdown of 5-aminoimidazole- (N-succinylocarboxamide) ribotide (SAICAR or 2-[5-amino-1-(5-phospho-beta-D-ribosyl)imidazole-4-carboxamido]succinate) to 5-aminoimidazole-4-carboxamide ribotide (AICAR or 5-amino-1-(5-phospho-beta-D-ribosyl)imidazole-4-carboxamide) and fumarate, and of adenylosuccinate (ADS or N(6)-(1,2-dicarboxyethyl)-AMP) to adenosine monophosphate (AMP) and fumarate. In Helicobacter pylori (strain ATCC 700392 / 26695) (Campylobacter pylori), this protein is Adenylosuccinate lyase (purB).